The primary structure comprises 602 residues: Adenylosuccinate synthetase (602 aa).

GTP contacts are provided by residues 74-80 (GDEGKGK) and 104-106 (GHT). Catalysis depends on aspartate 75, which acts as the Proton acceptor. 2 residues coordinate Mg(2+): aspartate 75 and glycine 104. Residues 75–78 (DEGK), 102–105 (NAGH), threonine 189, lysine 203, glutamine 315, threonine 331, and lysine 459 each bind IMP. Residue histidine 105 is the Proton donor of the active site. A substrate-binding site is contributed by 455 to 461 (AVTKKPR). Residues arginine 461 and 589–591 (GNG) each bind GTP.

It belongs to the adenylosuccinate synthetase family. In terms of assembly, homodimer. Mg(2+) is required as a cofactor.

The protein localises to the cytoplasm. The enzyme catalyses IMP + L-aspartate + GTP = N(6)-(1,2-dicarboxyethyl)-AMP + GDP + phosphate + 2 H(+). Its pathway is purine metabolism; AMP biosynthesis via de novo pathway; AMP from IMP: step 1/2. Its function is as follows. Plays an important role in the salvage pathway for purine nucleotide biosynthesis. Catalyzes the first committed step in the biosynthesis of AMP from IMP. The polypeptide is Adenylosuccinate synthetase (Trypanosoma brucei gambiense (strain MHOM/CI/86/DAL972)).